Consider the following 346-residue polypeptide: MSDRQAALDMALKQIEKQFGKGSIMKLGEQTDTRISTVPSGSLALDTALGIGGYPRGRIIEVYGPESSGKTTVALHAIAEVQQQGGQAAFIDAEHALDPVYAQKLGVNIDELLLSQPDTGEQALEIAEALVRSGAVDIVVIDSVAALVPKAEIEGDMGDSHVGLQARLMSQALRKLSGAINKSKTIAIFINQIREKVGVMFGNPETTPGGRALKFYSSVRLEVRRAEQLKQGNDIMGNKTRIKVVKNKVAPPFRIAEVDIMYGEGISKEGEIIDLGSELDIVQKSGAWYSYQEERLGQGRENAKQFLKENKDILLMIQEQIREHYGLDTNGVKAPEDEEGQEELEF.

64 to 71 is an ATP binding site; sequence GPESSGKT.

The protein belongs to the RecA family.

It localises to the cytoplasm. Its function is as follows. Can catalyze the hydrolysis of ATP in the presence of single-stranded DNA, the ATP-dependent uptake of single-stranded DNA by duplex DNA, and the ATP-dependent hybridization of homologous single-stranded DNAs. It interacts with LexA causing its activation and leading to its autocatalytic cleavage. This is Protein RecA from Bacillus pumilus (strain SAFR-032).